The sequence spans 444 residues: MSSSYDEASLAPEETTDSFWEVGNYKRTVKRIDDGHRLCNDLMNCVQERAKIEKAYGQQLTDWAKRWRQLIEKGPQYGSLERAWGAIMTEADKVSELHQEVKNNLLNEDLEKVKNWQKDAYHKQIMGGFKETKEAEDGFRKAQKPWAKKMKELEAAKKAYHLACKEEKLAMTREMNSKSEQSVTPEQQKKLQDKVDKCKQDVQKTQEKYEKVLEDVGKTTPQYMENMEQVFEQCQQFEEKRLVFLKEVLLDIKRHLNLAENSSYIHVYRELEQAIRGADAQEDLRWFRSTSGPGMPMNWPQFEEWNPDLPHTTTKKEKQPKKAEGVALTNATGAVESTSQAGDRGSVSSYDRGQPYATEWSDDESGNPFGGSEANGGANPFEDDSKGVRVRALYDYDGQEQDELSFKAGDELTKLGEEDEQGWCRGRLDSGQLGLYPANYVEAI.

Phosphoserine occurs at positions 2 and 79. Residues 13 to 283 (EETTDSFWEV…AIRGADAQED (271 aa)) enclose the F-BAR domain. Residues 26–275 (KRTVKRIDDG…HVYRELEQAI (250 aa)) are a coiled coil. Disordered regions lie at residues 173–194 (REMN…LQDK) and 309–386 (LPHT…DDSK). At threonine 184 the chain carries Phosphothreonine. Over residues 314–324 (TKKEKQPKKAE) the composition is skewed to basic and acidic residues. A compositionally biased stretch (polar residues) spans 329–351 (TNATGAVESTSQAGDRGSVSSYD). A phosphoserine mark is found at serine 346, serine 348, serine 349, serine 361, and serine 365. Residues 385-444 (SKGVRVRALYDYDGQEQDELSFKAGDELTKLGEEDEQGWCRGRLDSGQLGLYPANYVEAI) enclose the SH3 domain. Position 394 is a phosphotyrosine (tyrosine 394). Serine 405 and serine 430 each carry phosphoserine.

The protein belongs to the PACSIN family. As to quaternary structure, homodimer. May form heterooligomers with other PACSINs. Interacts with both COBL and DBNL. Identified in a complex composed of COBL, PACSIN1 and WASL. Interacts (via SH3 domain) with SYNJ1 and WASL. Interacts (via SH3 domain) with DNM1; the interaction is reduced by DNM1 phosphorylation. Interacts with DNM2 and DNM3. Interacts with MAPT. Interacts with EHD1 and EHD3. Interacts with TRPV4. Post-translationally, phosphorylated by casein kinase 2 (CK2) and protein kinase C (PKC).

Its subcellular location is the cytoplasm. It is found in the cell projection. The protein localises to the synapse. The protein resides in the synaptosome. It localises to the ruffle membrane. Its subcellular location is the membrane. It is found in the cytoplasmic vesicle membrane. The protein localises to the cytosol. The protein resides in the cell membrane. Binds to membranes via its F-BAR domain and mediates membrane tubulation. Plays a role in the reorganization of the microtubule cytoskeleton via its interaction with MAPT; this decreases microtubule stability and inhibits MAPT-induced microtubule polymerization. Plays a role in cellular transport processes by recruiting DNM1, DNM2 and DNM3 to membranes. Plays a role in the reorganization of the actin cytoskeleton and in neuron morphogenesis via its interaction with COBL and WASL, and by recruiting COBL to the cell cortex. Plays a role in the regulation of neurite formation, neurite branching and the regulation of neurite length. Required for normal synaptic vesicle endocytosis; this process retrieves previously released neurotransmitters to accommodate multiple cycles of neurotransmission. Required for normal excitatory and inhibitory synaptic transmission. This Pongo abelii (Sumatran orangutan) protein is Protein kinase C and casein kinase substrate in neurons protein 1 (Pacsin1).